Reading from the N-terminus, the 599-residue chain is Probable acetolactate synthase large subunit (599 aa).

Position 47 (Glu-47) interacts with thiamine diphosphate. FAD is bound by residues Arg-149, 258-279, and 301-320; these read HGTK…IGCR and DIDP…IVGD. Residues 404-484 are thiamine pyrophosphate binding; it reads QNQMWMAHYF…VVICIFDNRT (81 aa). Residues Asp-455 and Asn-482 each contribute to the Mg(2+) site.

It belongs to the TPP enzyme family. As to quaternary structure, dimer of large and small chains. Requires Mg(2+) as cofactor. The cofactor is thiamine diphosphate.

The enzyme catalyses 2 pyruvate + H(+) = (2S)-2-acetolactate + CO2. Its pathway is amino-acid biosynthesis; L-isoleucine biosynthesis; L-isoleucine from 2-oxobutanoate: step 1/4. The protein operates within amino-acid biosynthesis; L-valine biosynthesis; L-valine from pyruvate: step 1/4. This chain is Probable acetolactate synthase large subunit (ilvB), found in Methanococcus aeolicus.